A 192-amino-acid chain; its full sequence is Leucine-rich repeat-containing protein 51 (192 aa).

LRR repeat units follow at residues 49 to 71 (SLTQ…NQVA), 80 to 101 (NLAW…LTTF), and 103 to 124 (NLSV…NKLA). Residues 137 to 175 (NPMEEEKGYRQYVLCTLSRITTFDFAGVTKADRTTAEVW) enclose the LRRCT domain.

It is found in the cytoplasm. This chain is Leucine-rich repeat-containing protein 51, found in Pan troglodytes (Chimpanzee).